We begin with the raw amino-acid sequence, 473 residues long: Spliceosome-associated protein CWC27 homolog (473 aa).

Residue serine 2 is modified to N-acetylserine. The region spanning 11-166 is the PPIase cyclophilin-type domain; the sequence is TNGKVLLKTT…NPHKIKSCEV (156 aa). Basic and acidic residues predominate over residues 177-193; that stretch reads REIKRPKKEKPEEEVKK. Disordered stretches follow at residues 177–386 and 399–473; these read REIK…EDQT and QAIA…KERR. Positions 206–230 form a coiled coil; that stretch reads SFGEEAEEEEEEVNRVSQSMKGKSK. The span at 231–241 shows a compositional bias: basic and acidic residues; that stretch reads SSHDLLKDDPH. Residues 257 to 275 show a composition bias toward acidic residues; the sequence is GDLDDDGEDESAEYDEYVD. Basic and acidic residues-rich tracts occupy residues 276-287, 305-348, and 360-372; these read GDEKNLMRERIA, EVEK…KRSE, and EYRR…EALR. Positions 307-378 form a coiled coil; the sequence is EKKSVSRSEE…EALRKQQSKK (72 aa). The residue at position 347 (serine 347) is a Phosphoserine. Over residues 405 to 419 the composition is skewed to acidic residues; it reads PENDIPETEVEDDEG. Composition is skewed to basic and acidic residues over residues 426-438 and 458-473; these read QFED…KDAS and RREE…KERR.

This sequence belongs to the cyclophilin-type PPIase family. Part of the activated spliceosome B/catalytic step 1 spliceosome, one of the forms of the spliceosome which has a well-formed active site but still cannot catalyze the branching reaction and is composed at least of 52 proteins, the U2, U5 and U6 snRNAs and the pre-mRNA. Recruited during early steps of activated spliceosome B maturation, it is probably one of the first proteins released from this complex as he matures to the spliceosome C complex. Component of the minor spliceosome, which splices U12-type introns.

It is found in the nucleus. Its function is as follows. As part of the spliceosome, plays a role in pre-mRNA splicing. Probable inactive PPIase with no peptidyl-prolyl cis-trans isomerase activity. As a component of the minor spliceosome, involved in the splicing of U12-type introns in pre-mRNAs. This Macaca fascicularis (Crab-eating macaque) protein is Spliceosome-associated protein CWC27 homolog.